A 108-amino-acid polypeptide reads, in one-letter code: Probable chaperone-like protein YdbL (108 aa).

The signal sequence occupies residues 1-21 (MKKTLLLCAFLVGLVSSNVMA).

The protein localises to the periplasm. Functionally, probably acts as a chaperone-like protein that contributes to, but is not required for, the formation of the YdbH-YnbE intermembrane bridge. Affects the function and the structure of the YdbH-YnbE complex. Overexpression of ydbL causes a negative effect on YdbH-YnbE function. The protein is Probable chaperone-like protein YdbL (ydbL) of Escherichia coli (strain K12).